The primary structure comprises 262 residues: Small ribosomal subunit protein eS1 (262 aa).

Positions aspartate 234–glutamate 251 are enriched in basic and acidic residues. A disordered region spans residues aspartate 234 to histidine 262.

This sequence belongs to the eukaryotic ribosomal protein eS1 family. In terms of assembly, component of the small ribosomal subunit. Mature ribosomes consist of a small (40S) and a large (60S) subunit. The 40S subunit contains about 33 different proteins and 1 molecule of RNA (18S). The 60S subunit contains about 49 different proteins and 3 molecules of RNA (25S, 5.8S and 5S).

The protein resides in the cytoplasm. The polypeptide is Small ribosomal subunit protein eS1 (Plasmodium yoelii yoelii).